The sequence spans 470 residues: ATP synthase subunit beta (470 aa).

An ATP-binding site is contributed by 157 to 164; sequence GGAGVGKT.

It belongs to the ATPase alpha/beta chains family. In terms of assembly, F-type ATPases have 2 components, CF(1) - the catalytic core - and CF(0) - the membrane proton channel. CF(1) has five subunits: alpha(3), beta(3), gamma(1), delta(1), epsilon(1). CF(0) has three main subunits: a(1), b(2) and c(9-12). The alpha and beta chains form an alternating ring which encloses part of the gamma chain. CF(1) is attached to CF(0) by a central stalk formed by the gamma and epsilon chains, while a peripheral stalk is formed by the delta and b chains.

Its subcellular location is the cell inner membrane. The catalysed reaction is ATP + H2O + 4 H(+)(in) = ADP + phosphate + 5 H(+)(out). Its function is as follows. Produces ATP from ADP in the presence of a proton gradient across the membrane. The catalytic sites are hosted primarily by the beta subunits. This chain is ATP synthase subunit beta, found in Geobacter metallireducens (strain ATCC 53774 / DSM 7210 / GS-15).